Consider the following 190-residue polypeptide: dCTP deaminase, dUMP-forming (190 aa).

DCTP is bound by residues 101 to 106 (KSSLGR), aspartate 119, 127 to 129 (TLE), glutamine 148, tyrosine 162, and glutamine 174. The active-site Proton donor/acceptor is glutamate 129. Residues 163–190 (GSTRVGSKYQGQRGPTPSRSYQNFITST) are disordered. Positions 171 to 190 (YQGQRGPTPSRSYQNFITST) are enriched in polar residues.

This sequence belongs to the dCTP deaminase family. In terms of assembly, homotrimer.

The enzyme catalyses dCTP + 2 H2O = dUMP + NH4(+) + diphosphate. It functions in the pathway pyrimidine metabolism; dUMP biosynthesis; dUMP from dCTP: step 1/1. Functionally, bifunctional enzyme that catalyzes both the deamination of dCTP to dUTP and the hydrolysis of dUTP to dUMP without releasing the toxic dUTP intermediate. The chain is dCTP deaminase, dUMP-forming from Mycobacterium avium (strain 104).